The primary structure comprises 556 residues: Formate--tetrahydrofolate ligase (556 aa).

65–72 (TPAGEGKT) serves as a coordination point for ATP.

This sequence belongs to the formate--tetrahydrofolate ligase family.

The enzyme catalyses (6S)-5,6,7,8-tetrahydrofolate + formate + ATP = (6R)-10-formyltetrahydrofolate + ADP + phosphate. Its pathway is one-carbon metabolism; tetrahydrofolate interconversion. The protein is Formate--tetrahydrofolate ligase of Hyphomonas neptunium (strain ATCC 15444).